A 91-amino-acid polypeptide reads, in one-letter code: Small ribosomal subunit protein uS19 (91 aa).

This sequence belongs to the universal ribosomal protein uS19 family.

Its function is as follows. Protein S19 forms a complex with S13 that binds strongly to the 16S ribosomal RNA. The chain is Small ribosomal subunit protein uS19 from Leptothrix cholodnii (strain ATCC 51168 / LMG 8142 / SP-6) (Leptothrix discophora (strain SP-6)).